We begin with the raw amino-acid sequence, 52 residues long: Photosystem II reaction center protein M (52 aa).

The helical transmembrane segment at 6-26 (FGFAASLLFVGVPTIFLIGLF) threads the bilayer. Positions 31–52 (DGEKSSFYSDTSKGRLSPEPKK) are disordered. A compositionally biased stretch (basic and acidic residues) spans 42–52 (SKGRLSPEPKK).

The protein belongs to the PsbM family. As to quaternary structure, PSII is composed of 1 copy each of membrane proteins PsbA, PsbB, PsbC, PsbD, PsbE, PsbF, PsbH, PsbI, PsbJ, PsbK, PsbL, PsbM, PsbT, PsbX, PsbY, Psb30/Ycf12, peripheral proteins PsbO, CyanoQ (PsbQ), PsbU, PsbV and a large number of cofactors. It forms dimeric complexes.

It localises to the cellular thylakoid membrane. In terms of biological role, one of the components of the core complex of photosystem II (PSII). PSII is a light-driven water:plastoquinone oxidoreductase that uses light energy to abstract electrons from H(2)O, generating O(2) and a proton gradient subsequently used for ATP formation. It consists of a core antenna complex that captures photons, and an electron transfer chain that converts photonic excitation into a charge separation. This subunit is found at the monomer-monomer interface. The sequence is that of Photosystem II reaction center protein M from Prochlorococcus marinus (strain NATL1A).